Reading from the N-terminus, the 270-residue chain is ATP synthase subunit a (270 aa).

Transmembrane regions (helical) follow at residues 37-57, 98-118, 143-163, 217-237, and 239-259; these read NVHI…LWVF, VAPL…MDLI, DVNI…YYSI, VVFI…GALP, and AIFH…LTIV.

The protein belongs to the ATPase A chain family. In terms of assembly, F-type ATPases have 2 components, CF(1) - the catalytic core - and CF(0) - the membrane proton channel. CF(1) has five subunits: alpha(3), beta(3), gamma(1), delta(1), epsilon(1). CF(0) has three main subunits: a(1), b(2) and c(9-12). The alpha and beta chains form an alternating ring which encloses part of the gamma chain. CF(1) is attached to CF(0) by a central stalk formed by the gamma and epsilon chains, while a peripheral stalk is formed by the delta and b chains.

The protein resides in the cell inner membrane. In terms of biological role, key component of the proton channel; it plays a direct role in the translocation of protons across the membrane. This is ATP synthase subunit a from Aliivibrio salmonicida (strain LFI1238) (Vibrio salmonicida (strain LFI1238)).